The chain runs to 444 residues: NADH-dependent flavin oxidoreductase nadA (444 aa).

Residues 37–40 (ERMC) and Q123 contribute to the FMN site. Residues 127-149 (PGRQTPSHRQPEPISASDVPLDT) are disordered. 192–195 (HAAH) is a binding site for substrate. 345–346 (AR) lines the FMN pocket.

This sequence belongs to the NADH:flavin oxidoreductase/NADH oxidase family.

The protein resides in the cytoplasm. Its subcellular location is the cytosol. In terms of biological role, NADH-dependent flavin oxidoreductase; part of the gene cluster that mediates the biosynthesis of aflatoxins, a group of polyketide-derived furanocoumarins, and part of the most toxic and carcinogenic compounds among the known mycotoxins. The four major aflatoxins produced by A.parasiticus are aflatoxin B1 (AFB1), aflatoxin B2 (AFB2), aflatoxin G1 (AFG1) and aflatoxin G2 (AFG2). Within the aflatoxin pathway, the NADH-dependent flavin oxidoreductase nadA is specifically required for the last steps in which OMST is converted specifically to aflatoxin G1. The biosynthesis of aflatoxins begins with the norsolorinic acid synthase aflC that combines a hexanoyl starter unit produced by the fatty acid synthase aflA/aflB and 7 malonyl-CoA extender units to synthesize the precursor NOR. The second step is the conversion of NOR to averantin and requires the norsolorinic acid ketoreductase aflD, which catalyzes the dehydration of norsolorinic acid to form (1'S)-averantin. The norsolorinic acid reductases aflE and aflF may also play a role in the conversion of NOR to AVN. The cytochrome P450 monooxygenase aflG then catalyzes the hydroxylation of AVN to 5'hydroxyaverantin (HAVN). The next step is performed by the 5'-hydroxyaverantin dehydrogenase aflH that transforms HAVN to 5'-oxoaverantin (OAVN) which is further converted to averufin (AVF) by aflK that plays a dual role in the pathway, as a 5'-oxoaverantin cyclase that mediates conversion of 5'-oxoaverantin, as well as a versicolorin B synthase in a later step in the pathway. The averufin oxidase aflI catalyzes the conversion of AVF to versiconal hemiacetal acetate (VHA). VHA is then the substrate for the versiconal hemiacetal acetate esterase aflJ to yield versiconal (VAL). Versicolorin B synthase aflK then converts VAL to versicolorin B (VERB) by closing the bisfuran ring of aflatoxin which is required for DNA-binding, thus giving to aflatoxin its activity as a mutagen. Then, the activity of the versicolorin B desaturase aflL leads to versicolorin A (VERA). A branch point starts from VERB since it can also be converted to dihydrodemethylsterigmatocystin (DMDHST), probably also by aflL, VERA being a precursor for aflatoxins B1 and G1, and DMDHST for aflatoxins B2 and G2. Next, the versicolorin reductase aflM and the cytochrome P450 monooxygenase aflN are involved in conversion of VERA to demethylsterigmatocystin (DMST). AflX and aflY seem also involved in this step, through probable aflX-mediated epoxide ring-opening step following versicolorin A oxidation and aflY-mediated Baeyer-Villiger oxidation required for the formation of the xanthone ring. The methyltransferase aflO then leads to the modification of DMST to sterigmatocystin (ST), and of DMDHST to dihydrosterigmatocystin (DHST). Both ST and DHST are then substrates of the O-methyltransferase aflP to yield O-methylsterigmatocystin (OMST) and dihydro-O-methylsterigmatocystin (DHOMST), respectively. Finally OMST is converted to aflatoxins B1 and G1, and DHOMST to aflatoxins B2 and G2, via the action of several enzymes including O-methylsterigmatocystin oxidoreductase aflQ, the cytochrome P450 monooxygenase aflU, but also the NADH-dependent flavin oxidoreductase nadA which is specifically required for the synthesis of AFG1. The sequence is that of NADH-dependent flavin oxidoreductase nadA from Aspergillus parasiticus (strain ATCC 56775 / NRRL 5862 / SRRC 143 / SU-1).